The primary structure comprises 350 residues: Flap endonuclease 1 (350 aa).

The interval 1-102 (MGVTALRELI…REIERRQKLK (102 aa)) is N-domain. 7 residues coordinate Mg(2+): Asp-31, Asp-84, Glu-156, Glu-158, Asp-177, Asp-179, and Asp-240. The tract at residues 120–261 (EARKYAQMSA…TALRYVKSYG (142 aa)) is I-domain. The tract at residues 339–347 (KQSTLDMFF) is interaction with PCNA.

This sequence belongs to the XPG/RAD2 endonuclease family. FEN1 subfamily. As to quaternary structure, interacts with PCNA. PCNA stimulates the nuclease activity without altering cleavage specificity. Mg(2+) serves as cofactor.

Its function is as follows. Structure-specific nuclease with 5'-flap endonuclease and 5'-3' exonuclease activities involved in DNA replication and repair. During DNA replication, cleaves the 5'-overhanging flap structure that is generated by displacement synthesis when DNA polymerase encounters the 5'-end of a downstream Okazaki fragment. Binds the unpaired 3'-DNA end and kinks the DNA to facilitate 5' cleavage specificity. Cleaves one nucleotide into the double-stranded DNA from the junction in flap DNA, leaving a nick for ligation. Also involved in the base excision repair (BER) pathway. Acts as a genome stabilization factor that prevents flaps from equilibrating into structures that lead to duplications and deletions. Also possesses 5'-3' exonuclease activity on nicked or gapped double-stranded DNA. The sequence is that of Flap endonuclease 1 from Ignicoccus hospitalis (strain KIN4/I / DSM 18386 / JCM 14125).